A 337-amino-acid polypeptide reads, in one-letter code: GTPase Obg (337 aa).

The 161-residue stretch at 1–161 (MNLTDNAVIF…FKIKLDFVFL (161 aa)) folds into the Obg domain. Positions 162 to 333 (ADVGLFGYSN…LINKILLFLE (172 aa)) constitute an OBG-type G domain. GTP is bound by residues 168–175 (GYSNTGRS), 193–197 (FTTLF), 214–217 (DIPS), 282–285 (NKTD), and 314–316 (SLN). 2 residues coordinate Mg(2+): serine 175 and threonine 195.

It belongs to the TRAFAC class OBG-HflX-like GTPase superfamily. OBG GTPase family. Monomer. It depends on Mg(2+) as a cofactor.

It is found in the cytoplasm. Its function is as follows. An essential GTPase which binds GTP, GDP and possibly (p)ppGpp with moderate affinity, with high nucleotide exchange rates and a fairly low GTP hydrolysis rate. Plays a role in control of the cell cycle, stress response, ribosome biogenesis and in those bacteria that undergo differentiation, in morphogenesis control. This Wigglesworthia glossinidia brevipalpis protein is GTPase Obg.